The chain runs to 206 residues: Dephospho-CoA kinase (206 aa).

In terms of domain architecture, DPCK spans 4–200; that stretch reads IVALTGGIGS…AHYLQLASQF (197 aa). 12–17 contributes to the ATP binding site; that stretch reads GSGKST.

Belongs to the CoaE family.

It localises to the cytoplasm. It catalyses the reaction 3'-dephospho-CoA + ATP = ADP + CoA + H(+). Its pathway is cofactor biosynthesis; coenzyme A biosynthesis; CoA from (R)-pantothenate: step 5/5. Catalyzes the phosphorylation of the 3'-hydroxyl group of dephosphocoenzyme A to form coenzyme A. The sequence is that of Dephospho-CoA kinase from Shigella flexneri.